We begin with the raw amino-acid sequence, 241 residues long: 2-C-methyl-D-erythritol 4-phosphate cytidylyltransferase (241 aa).

It belongs to the IspD/TarI cytidylyltransferase family. IspD subfamily. In terms of assembly, homodimer.

It carries out the reaction 2-C-methyl-D-erythritol 4-phosphate + CTP + H(+) = 4-CDP-2-C-methyl-D-erythritol + diphosphate. It functions in the pathway isoprenoid biosynthesis; isopentenyl diphosphate biosynthesis via DXP pathway; isopentenyl diphosphate from 1-deoxy-D-xylulose 5-phosphate: step 2/6. Its function is as follows. Catalyzes the formation of 4-diphosphocytidyl-2-C-methyl-D-erythritol from CTP and 2-C-methyl-D-erythritol 4-phosphate (MEP). This is 2-C-methyl-D-erythritol 4-phosphate cytidylyltransferase from Yersinia pestis.